The following is a 170-amino-acid chain: CASP-like protein 2D1 (170 aa).

Residues 1–4 are Cytoplasmic-facing; the sequence is MLKL. The chain crosses the membrane as a helical span at residues 5–25; it reads LDFSLRLSVIPLSVATIWLTV. Residues 26–47 are Extracellular-facing; the sequence is TNKQDNSIYGYLKYSDLTGLKY. A helical transmembrane segment spans residues 48 to 68; the sequence is MVFISGICASYAFIAAVSTWI. At 69 to 83 the chain is on the cytoplasmic side; the sequence is RCIVTKTWLFFVSDQ. A helical transmembrane segment spans residues 84-104; the sequence is IVAYLMVTSGTAVLEILYLAY. Over 105-127 the chain is Extracellular; the sequence is NGDREVSWSEACTSYGKFCYRMK. A helical transmembrane segment spans residues 128-148; it reads LAVILHALALSCFIILAVISA. Topologically, residues 149–170 are cytoplasmic; it reads YRAFSIFEPPLVPSKVVEEDRA.

The protein belongs to the Casparian strip membrane proteins (CASP) family. As to quaternary structure, homodimer and heterodimers.

Its subcellular location is the cell membrane. This Populus trichocarpa (Western balsam poplar) protein is CASP-like protein 2D1.